A 562-amino-acid polypeptide reads, in one-letter code: Arginine--tRNA ligase (562 aa).

The 'HIGH' region motif lies at 121–131 (PNIAKPMGMGH).

It belongs to the class-I aminoacyl-tRNA synthetase family. As to quaternary structure, monomer.

It localises to the cytoplasm. The catalysed reaction is tRNA(Arg) + L-arginine + ATP = L-arginyl-tRNA(Arg) + AMP + diphosphate. In Limosilactobacillus fermentum (strain NBRC 3956 / LMG 18251) (Lactobacillus fermentum), this protein is Arginine--tRNA ligase.